Reading from the N-terminus, the 381-residue chain is Chaperone protein DnaJ (381 aa).

In terms of domain architecture, J spans 4–69 (DYYEILGVTR…QKRAAYDRFG (66 aa)). A CR-type zinc finger spans residues 135 to 213 (GKTAQINIPS…CQGTRRVEKN (79 aa)). 8 residues coordinate Zn(2+): C148, C151, C165, C168, C187, C190, C201, and C204. 4 CXXCXGXG motif repeats span residues 148–155 (CDACEGSG), 165–172 (CGTCHGAG), 187–194 (CPVCHGRG), and 201–208 (CPKCQGTR).

It belongs to the DnaJ family. As to quaternary structure, homodimer. Requires Zn(2+) as cofactor.

Its subcellular location is the cytoplasm. In terms of biological role, participates actively in the response to hyperosmotic and heat shock by preventing the aggregation of stress-denatured proteins and by disaggregating proteins, also in an autonomous, DnaK-independent fashion. Unfolded proteins bind initially to DnaJ; upon interaction with the DnaJ-bound protein, DnaK hydrolyzes its bound ATP, resulting in the formation of a stable complex. GrpE releases ADP from DnaK; ATP binding to DnaK triggers the release of the substrate protein, thus completing the reaction cycle. Several rounds of ATP-dependent interactions between DnaJ, DnaK and GrpE are required for fully efficient folding. Also involved, together with DnaK and GrpE, in the DNA replication of plasmids through activation of initiation proteins. The polypeptide is Chaperone protein DnaJ (Bartonella henselae (strain ATCC 49882 / DSM 28221 / CCUG 30454 / Houston 1) (Rochalimaea henselae)).